Here is a 242-residue protein sequence, read N- to C-terminus: Protein odd-skipped-related 1 (242 aa).

3 consecutive C2H2-type zinc fingers follow at residues 128-150, 156-178, and 184-207; these read FICK…ERTH, FHCE…KYIH, and HKCE…SCHH.

Belongs to the Odd C2H2-type zinc-finger protein family.

Its subcellular location is the nucleus. Functionally, may function as transcription regulator. Essential for larval development. Required for morphogenesis and function of the digestive tract. In Caenorhabditis elegans, this protein is Protein odd-skipped-related 1.